A 170-amino-acid polypeptide reads, in one-letter code: MNLKDYIATIENYPKEGVTFRDISPLMADGNAYSYAVREIVQYATDKKIDMIVGPEARGFIVGCPVAFELGIGFAPVRKPGKLPREVISADYEKEYGVDTLTMHADAIKPGQRVLIVDDLLATGGTVKATIEMIERLGGVVAGCAFLIELDELKGREVIGDYDYKVLMHY.

The protein belongs to the purine/pyrimidine phosphoribosyltransferase family. Homodimer.

The protein localises to the cytoplasm. The catalysed reaction is AMP + diphosphate = 5-phospho-alpha-D-ribose 1-diphosphate + adenine. It participates in purine metabolism; AMP biosynthesis via salvage pathway; AMP from adenine: step 1/1. Catalyzes a salvage reaction resulting in the formation of AMP, that is energically less costly than de novo synthesis. This is Adenine phosphoribosyltransferase from Streptococcus sanguinis (strain SK36).